Reading from the N-terminus, the 309-residue chain is MEAVLSALPWVPVNISGSDLLAKAWFGDSQYRVLLTDLSTVWEEEMSTDDIQSRAQDLNKRLRAPAQAFFSHLCSVARPCFSGLDEDQISAAQAALEQHGESLTVKLKSELAGLPFYWEFRCTTTPVAVVCRQLVRPLLAMTLVLQRQAEDLAALLARKDAEIQDYQENGAVLSRARLQTEPFEVHQYKENFITQILPQMNVTLDSLGFDSELQALYMAVNSGKTGRKRKHSPDSSPAAQENHITDHQHISESTDVGPSLASQEHNNAKESGRSQVANSQQTLPLSSTAGSEDRSTSRAKKKKAVGLFR.

Positions 1–134 are globular head; the sequence is MEAVLSALPW…TPVAVVCRQL (134 aa). The segment at 223–298 is C-terminal tail; the sequence is GKTGRKRKHS…AGSEDRSTSR (76 aa). Positions 223–309 are disordered; it reads GKTGRKRKHS…KKKKAVGLFR (87 aa). A compositionally biased stretch (basic and acidic residues) spans 243 to 252; the sequence is HITDHQHISE. Polar residues-rich tracts occupy residues 253 to 265 and 273 to 290; these read STDVGPSLASQEH and RSQVANSQQTLPLSSTAG. Residues 297–309 show a composition bias toward basic residues; the sequence is SRAKKKKAVGLFR. Positions 299–309 match the XLM motif; it reads AKKKKAVGLFR.

The protein belongs to the XRCC4-XLF family. XLF subfamily. In terms of assembly, homodimer. Interacts with xrcc4; the interaction is direct and is mediated via a head-to-head interaction between N-terminal head regions. Component of the core long-range non-homologous end joining (NHEJ) complex (also named DNA-PK complex) composed of prkdc/DNA-PKcs, lig4, xrcc4, xrcc6/Ku70, xrcc5/Ku80 and nhej1/xlf.

The protein localises to the nucleus. It localises to the chromosome. Its function is as follows. DNA repair protein involved in DNA non-homologous end joining (NHEJ); it is required for double-strand break (DSB) repair and V(D)J recombination and is also involved in telomere maintenance. Plays a key role in NHEJ by promoting the ligation of various mismatched and non-cohesive ends. In some studies, has been shown to associate with xrcc4 to form alternating helical filaments that bridge DNA and act like a bandage, holding together the broken DNA until it is repaired. Alternatively, it has also been shown that rather than forming filaments, a single nhej1 dimer interacts through both head domains with xrcc4 to promote the close alignment of DNA ends. The xrcc4-nhej1/xlf subcomplex binds to the DNA fragments of a DSB in a highly diffusive manner and robustly bridges two independent DNA molecules, holding the broken DNA fragments in close proximity to one other. The mobility of the bridges ensures that the ends remain accessible for further processing by other repair factors. The polypeptide is Non-homologous end-joining factor 1 (nhej1) (Danio rerio (Zebrafish)).